The chain runs to 626 residues: Janus kinase and microtubule-interacting protein 1 (626 aa).

Residues 1 to 22 (MSKKGRSKGEKPEMETDAVQMA) are disordered. The interval 1-365 (MSKKGRSKGE…KIKNLTRENV (365 aa)) is mediates association with microtubules. Coiled-coil stretches lie at residues 19–255 (VQMA…EAER) and 284–413 (ERDV…DDLS). Residues 365–626 (VEMKEKLSAQ…ILFEPKLKFM (262 aa)) are mediates interaction with TYK2 and GABBR1. Residue Ser-382 is modified to Phosphoserine. Positions 452–461 (ETLSETSYNT) are enriched in polar residues. The tract at residues 452-477 (ETLSETSYNTDRTDRTPATPEEDLDD) is disordered. Thr-470 is modified (phosphothreonine). Positions 490 to 604 (QLTREYQALQ…EFRVLELEVR (115 aa)) form a coiled coil.

It belongs to the JAKMIP family. Homodimer. Forms a complex with GABBR1 and KIF5B/kinesin-1. Interacts with JAK1 and TYK2. As to expression, predominantly expressed in neural tissues and lymphoid cells (at protein level). Isoform 2, isoform 3 and isoform 4 are specifically expressed in brain and retina. Isoform 1 and isoform 5 are also detected in liver, lung and skeletal muscle. Also detected in testis and to a lower extent spleen and intestine.

It is found in the cytoplasm. The protein localises to the cytoskeleton. The protein resides in the membrane. In terms of biological role, associates with microtubules and may play a role in the microtubule-dependent transport of the GABA-B receptor. May play a role in JAK1 signaling and regulate microtubule cytoskeleton rearrangements. This is Janus kinase and microtubule-interacting protein 1 (JAKMIP1) from Homo sapiens (Human).